The following is a 325-amino-acid chain: Elongation factor P--(R)-beta-lysine ligase (325 aa).

Position 76-78 (76-78 (SPE)) interacts with substrate. ATP contacts are provided by residues 100 to 102 (RNE) and asparagine 109. Tyrosine 118 is a substrate binding site. Residue 244-245 (EL) coordinates ATP. Residue glutamate 251 coordinates substrate. Glycine 300 contacts ATP.

The protein belongs to the class-II aminoacyl-tRNA synthetase family. EpmA subfamily. In terms of assembly, homodimer.

The catalysed reaction is D-beta-lysine + L-lysyl-[protein] + ATP = N(6)-((3R)-3,6-diaminohexanoyl)-L-lysyl-[protein] + AMP + diphosphate + H(+). With EpmB is involved in the beta-lysylation step of the post-translational modification of translation elongation factor P (EF-P) on 'Lys-34'. Catalyzes the ATP-dependent activation of (R)-beta-lysine produced by EpmB, forming a lysyl-adenylate, from which the beta-lysyl moiety is then transferred to the epsilon-amino group of EF-P 'Lys-34'. The sequence is that of Elongation factor P--(R)-beta-lysine ligase from Salmonella agona (strain SL483).